The chain runs to 277 residues: Large ribosomal subunit protein uL2 (277 aa).

Positions 219–277 (TVRGSVMNPNDHPHGGGEGKAPVGRKAPSTPWGKPALGLKTRNKKAKSDKLIVRRRNEK) are disordered. A compositionally biased stretch (basic and acidic residues) spans 264–277 (AKSDKLIVRRRNEK).

It belongs to the universal ribosomal protein uL2 family. As to quaternary structure, part of the 50S ribosomal subunit. Forms a bridge to the 30S subunit in the 70S ribosome.

Its function is as follows. One of the primary rRNA binding proteins. Required for association of the 30S and 50S subunits to form the 70S ribosome, for tRNA binding and peptide bond formation. It has been suggested to have peptidyltransferase activity; this is somewhat controversial. Makes several contacts with the 16S rRNA in the 70S ribosome. This chain is Large ribosomal subunit protein uL2, found in Streptococcus pyogenes serotype M1.